Here is a 220-residue protein sequence, read N- to C-terminus: Glutathione S-transferase U26 (220 aa).

The region spanning 4–83 is the GST N-terminal domain; the sequence is DQVILLDYWP…YIDEVWSDAS (80 aa). Residues 14 to 15, 40 to 41, 54 to 55, and 67 to 68 each bind glutathione; these read SM, VK, KI, and ES. The GST C-terminal domain occupies 89–210; the sequence is DPYQKSRARF…ADSDRIIEYV (122 aa).

The protein belongs to the GST superfamily. Tau family.

Its subcellular location is the cytoplasm. The protein localises to the cytosol. The catalysed reaction is RX + glutathione = an S-substituted glutathione + a halide anion + H(+). Its function is as follows. In vitro, possesses glutathione S-transferase activity toward 1-chloro-2,4-dinitrobenzene (CDNB). May be involved in the conjugation of reduced glutathione to a wide number of exogenous and endogenous hydrophobic electrophiles and have a detoxification role against certain herbicides. The sequence is that of Glutathione S-transferase U26 (GSTU26) from Arabidopsis thaliana (Mouse-ear cress).